The chain runs to 580 residues: Acyl-coenzyme A synthetase ACSM4, mitochondrial (580 aa).

Residues 1 to 22 constitute a mitochondrion transit peptide; that stretch reads MKVLLHCQRLRFIWLAKPAGRH. Residues 229–237, 368–373, D455, R470, and K566 contribute to the ATP site; these read TSGTTGSPK and EGYGQT.

It belongs to the ATP-dependent AMP-binding enzyme family. Mg(2+) serves as cofactor. Requires Mn(2+) as cofactor.

The protein localises to the mitochondrion. It catalyses the reaction a medium-chain fatty acid + ATP + CoA = a medium-chain fatty acyl-CoA + AMP + diphosphate. The catalysed reaction is hexanoate + ATP + CoA = hexanoyl-CoA + AMP + diphosphate. It carries out the reaction octanoate + ATP + CoA = octanoyl-CoA + AMP + diphosphate. The enzyme catalyses decanoate + ATP + CoA = decanoyl-CoA + AMP + diphosphate. It catalyses the reaction dodecanoate + ATP + CoA = dodecanoyl-CoA + AMP + diphosphate. Functionally, catalyzes the activation of fatty acids by CoA to produce an acyl-CoA, the first step in fatty acid metabolism. Capable of activating medium-chain fatty acids with a preference for C6-12 fatty acids. This Mus musculus (Mouse) protein is Acyl-coenzyme A synthetase ACSM4, mitochondrial (Acsm4).